Reading from the N-terminus, the 352-residue chain is MDFLRNLFSQTLSLGSQKERLLDELTLEGVARYMQSERCRRVICLVGAGISTSAGIPDFRSPSTGLYDNLEKYHLPYPEAIFEISYFKKHPEPFFALAKELYPGQFKPTICHYFMRLLKDKGLLLRCYTQNIDTLERIAGLEQEDLVEAHGTFYTSHCVSASCRHEYPLSWMKEKIFSEVTPKCEDCQSLVKPDIVFFGESLPARFFSCMQSDFLKVDLLLVMGTSLQVQPFASLISKAPLSTPRLLINKEKAGQSDPFLGMIMGLGGGMDFDSKKAYRDVAWLGECDQGCLALAELLGWKKELEDLVRREHASIDAQSGAGVPNPSTSASPKKSPPPAKDEARTTEREKPQ.

S16 bears the Phosphoserine mark. Residues R20–K301 enclose the Deacetylase sirtuin-type domain. NAD(+) contacts are provided by residues A48–T52 and D58–R60. S63 is subject to Phosphoserine. Q130–D133 is an NAD(+) binding site. H150 serves as the catalytic Proton acceptor. 2 residues coordinate Zn(2+): C158 and C163. S170 is subject to Phosphoserine. 2 residues coordinate Zn(2+): C184 and C187. Residues T225–S226, N249–E251, and C287 each bind NAD(+). Residues S314–Q352 are disordered. A compositionally biased stretch (low complexity) spans P324–K333. 2 positions are modified to phosphoserine: S331 and S335. Positions A339–Q352 are enriched in basic and acidic residues.

Belongs to the sirtuin family. Class I subfamily. In terms of assembly, interacts with CDC20, FOXO3 and FZR1. Associates with microtubules in primary cortical mature neurons. Homotrimer. Interacts (via both phosphorylated, unphosphorylated, active or inactive forms) with HDAC6; the interaction is necessary for the complex to interact with alpha-tubulin, suggesting that these proteins belong to a large complex that deacetylates the cytoskeleton. Interacts with FOXO1; the interaction is disrupted upon serum-starvation or oxidative stress, leading to increased level of acetylated FOXO1 and induction of autophagy. Interacts with RELA; the interaction occurs in the cytoplasm and is increased in a TNF-alpha-dependent manner. Interacts with HOXA10; the interaction is direct. Interacts with YWHAB and YWHAG; the interactions occur in a AKT-dependent manner and increase SIRT2-dependent TP53 deacetylation. Interacts with MAPK1/ERK2 and MAPK3/ERK1; the interactions increase SIRT2 stability and deacetylation activity. Interacts (phosphorylated form) with KMT5A isoform 2; the interaction is direct, stimulates KMT5A-mediated methyltransferase activity on histone at 'Lys-20' (H4K20me1) and is increased in a H(2)O(2)-induced oxidative stress-dependent manner. Interacts with G6PD; the interaction is enhanced by H(2)O(2) treatment. Interacts with a G1/S-specific cyclin E-CDK2 complex. Interacts with AURKA, CDK5R1 (p35 form) and CDK5 and HIF1A. Interacts with the tRNA ligase SARS1; recruited to the VEGFA promoter via interaction with SARS1. Interacts with BEX4; negatively regulates alpha-tubulin deacetylation by SIRT2. Interacts with MORN3; the interaction enhances the ubiquitination of p53/TP53. It depends on Zn(2+) as a cofactor. Phosphorylated at phosphoserine and phosphothreonine. Phosphorylated at Ser-331 by a mitotic kinase CDK1/cyclin B at the G2/M transition; phosphorylation regulates the delay in cell-cycle progression. Phosphorylated at Ser-331 by a mitotic kinase G1/S-specific cyclin E/Cdk2 complex; phosphorylation inactivates SIRT2-mediated alpha-tubulin deacetylation and thereby negatively regulates cell adhesion, cell migration and neurite outgrowth during neuronal differentiation. Phosphorylated by cyclin A/Cdk2 and p35-Cdk5 complexes and to a lesser extent by the cyclin D3/Cdk4 and cyclin B/Cdk1, in vitro. Dephosphorylated at Ser-331 by CDC14A and CDC14B around early anaphase. In terms of processing, acetylated by EP300; acetylation leads both to the decreased of SIRT2-mediated alpha-tubulin deacetylase activity and SIRT2-mediated down-regulation of TP53 transcriptional activity. Post-translationally, ubiquitinated.

Its subcellular location is the nucleus. It localises to the cytoplasm. The protein localises to the perinuclear region. It is found in the cytoskeleton. The protein resides in the microtubule organizing center. Its subcellular location is the centrosome. It localises to the centriole. The protein localises to the spindle. It is found in the midbody. The protein resides in the chromosome. Its subcellular location is the perikaryon. It localises to the cell projection. The protein localises to the growth cone. It is found in the myelin membrane. The enzyme catalyses N(6)-acetyl-L-lysyl-[protein] + NAD(+) + H2O = 2''-O-acetyl-ADP-D-ribose + nicotinamide + L-lysyl-[protein]. It catalyses the reaction N(6)-tetradecanoyl-L-lysyl-[protein] + NAD(+) + H2O = 2''-O-tetradecanoyl-ADP-D-ribose + nicotinamide + L-lysyl-[protein]. The catalysed reaction is N(6)-hexadecanoyl-L-lysyl-[protein] + NAD(+) + H2O = 2''-O-hexadecanoyl-ADP-D-ribose + nicotinamide + L-lysyl-[protein]. With respect to regulation, inhibited by Sirtinol, A3 and M15 small molecules. Inhibited by nicotinamide. Inhibited by a macrocyclic peptide inhibitor S2iL5. Inhibited by EP300-induced acetylation. Functionally, NAD-dependent protein deacetylase, which deacetylates internal lysines on histone and alpha-tubulin as well as many other proteins such as key transcription factors. Participates in the modulation of multiple and diverse biological processes such as cell cycle control, genomic integrity, microtubule dynamics, cell differentiation, metabolic networks, and autophagy. Plays a major role in the control of cell cycle progression and genomic stability. Functions in the antephase checkpoint preventing precocious mitotic entry in response to microtubule stress agents, and hence allowing proper inheritance of chromosomes. Positively regulates the anaphase promoting complex/cyclosome (APC/C) ubiquitin ligase complex activity by deacetylating CDC20 and FZR1, then allowing progression through mitosis. Associates both with chromatin at transcriptional start sites (TSSs) and enhancers of active genes. Plays a role in cell cycle and chromatin compaction through epigenetic modulation of the regulation of histone H4 'Lys-20' methylation (H4K20me1) during early mitosis. Specifically deacetylates histone H4 at 'Lys-16' (H4K16ac) between the G2/M transition and metaphase enabling H4K20me1 deposition by KMT5A leading to ulterior levels of H4K20me2 and H4K20me3 deposition throughout cell cycle, and mitotic S-phase progression. Deacetylates KMT5A modulating KMT5A chromatin localization during the mitotic stress response. Also deacetylates histone H3 at 'Lys-57' (H3K56ac) during the mitotic G2/M transition. During oocyte meiosis progression, may deacetylate histone H4 at 'Lys-16' (H4K16ac) and alpha-tubulin, regulating spindle assembly and chromosome alignment by influencing microtubule dynamics and kinetochore function. Deacetylates histone H4 at 'Lys-16' (H4K16ac) at the VEGFA promoter and thereby contributes to regulate expression of VEGFA, a key regulator of angiogenesis. Deacetylates alpha-tubulin at 'Lys-40' and hence controls neuronal motility, oligodendroglial cell arbor projection processes and proliferation of non-neuronal cells. Phosphorylation at Ser-368 by a G1/S-specific cyclin E-CDK2 complex inactivates SIRT2-mediated alpha-tubulin deacetylation, negatively regulating cell adhesion, cell migration and neurite outgrowth during neuronal differentiation. Deacetylates PARD3 and participates in the regulation of Schwann cell peripheral myelination formation during early postnatal development and during postinjury remyelination. Involved in several cellular metabolic pathways. Plays a role in the regulation of blood glucose homeostasis by deacetylating and stabilizing phosphoenolpyruvate carboxykinase PCK1 activity in response to low nutrient availability. Acts as a key regulator in the pentose phosphate pathway (PPP) by deacetylating and activating the glucose-6-phosphate G6PD enzyme, and therefore, stimulates the production of cytosolic NADPH to counteract oxidative damage. Maintains energy homeostasis in response to nutrient deprivation as well as energy expenditure by inhibiting adipogenesis and promoting lipolysis. Attenuates adipocyte differentiation by deacetylating and promoting FOXO1 interaction to PPARG and subsequent repression of PPARG-dependent transcriptional activity. Plays a role in the regulation of lysosome-mediated degradation of protein aggregates by autophagy in neuronal cells. Deacetylates FOXO1 in response to oxidative stress or serum deprivation, thereby negatively regulating FOXO1-mediated autophagy. Deacetylates a broad range of transcription factors and co-regulators regulating target gene expression. Deacetylates transcriptional factor FOXO3 stimulating the ubiquitin ligase SCF(SKP2)-mediated FOXO3 ubiquitination and degradation. Deacetylates HIF1A and therefore promotes HIF1A degradation and inhibition of HIF1A transcriptional activity in tumor cells in response to hypoxia. Deacetylates RELA in the cytoplasm inhibiting NF-kappaB-dependent transcription activation upon TNF-alpha stimulation. Inhibits transcriptional activation by deacetylating p53/TP53 and EP300. Also deacetylates EIF5A. Functions as a negative regulator on oxidative stress-tolerance in response to anoxia-reoxygenation conditions. Plays a role as tumor suppressor. In addition to protein deacetylase activity, also has activity toward long-chain fatty acyl groups and mediates protein-lysine demyristoylation and depalmitoylation of target proteins, such as ARF6 and KRAS, thereby regulating their association with membranes. This Pongo abelii (Sumatran orangutan) protein is NAD-dependent protein deacetylase sirtuin-2 (SIRT2).